Consider the following 198-residue polypeptide: NAD(P)H dehydrogenase (quinone) (198 aa).

Residues 4-189 (VLVLYYSMYG…SIARYQGEYV (186 aa)) form the Flavodoxin-like domain. Residues 10 to 15 (SMYGHI) and 78 to 80 (TRF) each bind FMN. Position 12 (Tyr12) interacts with NAD(+). Trp98 provides a ligand contact to substrate. Residues 113-118 (STGTGG) and His133 each bind FMN.

Belongs to the WrbA family. FMN serves as cofactor.

The catalysed reaction is a quinone + NADH + H(+) = a quinol + NAD(+). It carries out the reaction a quinone + NADPH + H(+) = a quinol + NADP(+). This chain is NAD(P)H dehydrogenase (quinone), found in Escherichia coli (strain SE11).